We begin with the raw amino-acid sequence, 176 residues long: Large ribosomal subunit protein uL16 (176 aa).

The protein belongs to the universal ribosomal protein uL16 family.

This Sulfolobus acidocaldarius (strain ATCC 33909 / DSM 639 / JCM 8929 / NBRC 15157 / NCIMB 11770) protein is Large ribosomal subunit protein uL16.